Consider the following 193-residue polypeptide: Acyl carrier protein phosphodiesterase (193 aa).

Belongs to the AcpH family.

The enzyme catalyses holo-[ACP] + H2O = apo-[ACP] + (R)-4'-phosphopantetheine + H(+). Converts holo-ACP to apo-ACP by hydrolytic cleavage of the phosphopantetheine prosthetic group from ACP. This is Acyl carrier protein phosphodiesterase from Pectobacterium atrosepticum (strain SCRI 1043 / ATCC BAA-672) (Erwinia carotovora subsp. atroseptica).